Here is a 517-residue protein sequence, read N- to C-terminus: UPF0522 protein B (517 aa).

The signal sequence occupies residues 1 to 19; sequence MNKTIILLLISIIFEIVIS. N-linked (GlcNAc...) asparagine glycosylation is found at Asn-148, Asn-245, Asn-333, Asn-345, Asn-370, Asn-423, Asn-432, and Asn-495.

The protein belongs to the UPF0522 family.

Its subcellular location is the secreted. The sequence is that of UPF0522 protein B from Dictyostelium discoideum (Social amoeba).